The sequence spans 364 residues: tRNA 2-selenouridine synthase (364 aa).

In terms of domain architecture, Rhodanese spans 14–137; the sequence is LLADTPLIDV…LRQTAIQATW (124 aa). Catalysis depends on Cys97, which acts as the S-selanylcysteine intermediate. Gly149 is a binding site for (2E)-geranyl diphosphate.

The protein belongs to the SelU family. In terms of assembly, monomer.

The catalysed reaction is 5-methylaminomethyl-2-thiouridine(34) in tRNA + selenophosphate + (2E)-geranyl diphosphate + H2O + H(+) = 5-methylaminomethyl-2-selenouridine(34) in tRNA + (2E)-thiogeraniol + phosphate + diphosphate. It carries out the reaction 5-methylaminomethyl-2-thiouridine(34) in tRNA + (2E)-geranyl diphosphate = 5-methylaminomethyl-S-(2E)-geranyl-thiouridine(34) in tRNA + diphosphate. It catalyses the reaction 5-methylaminomethyl-S-(2E)-geranyl-thiouridine(34) in tRNA + selenophosphate + H(+) = 5-methylaminomethyl-2-(Se-phospho)selenouridine(34) in tRNA + (2E)-thiogeraniol. The enzyme catalyses 5-methylaminomethyl-2-(Se-phospho)selenouridine(34) in tRNA + H2O = 5-methylaminomethyl-2-selenouridine(34) in tRNA + phosphate. In terms of biological role, involved in the post-transcriptional modification of the uridine at the wobble position (U34) of tRNA(Lys), tRNA(Glu) and tRNA(Gln). Catalyzes the conversion of 2-thiouridine (S2U-RNA) to 2-selenouridine (Se2U-RNA). Acts in a two-step process involving geranylation of 2-thiouridine (S2U) to S-geranyl-2-thiouridine (geS2U) and subsequent selenation of the latter derivative to 2-selenouridine (Se2U) in the tRNA chain. The sequence is that of tRNA 2-selenouridine synthase from Salmonella typhimurium (strain LT2 / SGSC1412 / ATCC 700720).